Consider the following 172-residue polypeptide: Phosphopantetheine adenylyltransferase (172 aa).

Residue threonine 14 participates in substrate binding. Residues 14-15 (TF) and histidine 22 contribute to the ATP site. 3 residues coordinate substrate: lysine 46, leucine 78, and arginine 92. Residues 93-95 (GMR), glutamate 103, and 128-134 (WLYISST) each bind ATP.

This sequence belongs to the bacterial CoaD family. As to quaternary structure, homohexamer. The cofactor is Mg(2+).

It is found in the cytoplasm. The catalysed reaction is (R)-4'-phosphopantetheine + ATP + H(+) = 3'-dephospho-CoA + diphosphate. Its pathway is cofactor biosynthesis; coenzyme A biosynthesis; CoA from (R)-pantothenate: step 4/5. Reversibly transfers an adenylyl group from ATP to 4'-phosphopantetheine, yielding dephospho-CoA (dPCoA) and pyrophosphate. This chain is Phosphopantetheine adenylyltransferase, found in Solidesulfovibrio magneticus (strain ATCC 700980 / DSM 13731 / RS-1) (Desulfovibrio magneticus).